The primary structure comprises 465 residues: Ribulose bisphosphate carboxylase large chain (465 aa).

At Lys4 the chain carries N6,N6,N6-trimethyllysine. The substrate site is built by Asn113 and Thr163. The active-site Proton acceptor is Lys165. Lys167 contributes to the substrate binding site. Residues Lys191, Asp193, and Glu194 each contribute to the Mg(2+) site. Lys191 carries the N6-carboxylysine modification. Residue His284 is the Proton acceptor of the active site. Residues Arg285, His317, and Ser369 each contribute to the substrate site.

This sequence belongs to the RuBisCO large chain family. Type I subfamily. In terms of assembly, heterohexadecamer of 8 large chains and 8 small chains; disulfide-linked. The disulfide link is formed within the large subunit homodimers. The cofactor is Mg(2+). The disulfide bond which can form in the large chain dimeric partners within the hexadecamer appears to be associated with oxidative stress and protein turnover.

It is found in the plastid. Its subcellular location is the chloroplast. The catalysed reaction is 2 (2R)-3-phosphoglycerate + 2 H(+) = D-ribulose 1,5-bisphosphate + CO2 + H2O. It carries out the reaction D-ribulose 1,5-bisphosphate + O2 = 2-phosphoglycolate + (2R)-3-phosphoglycerate + 2 H(+). Its function is as follows. RuBisCO catalyzes two reactions: the carboxylation of D-ribulose 1,5-bisphosphate, the primary event in carbon dioxide fixation, as well as the oxidative fragmentation of the pentose substrate in the photorespiration process. Both reactions occur simultaneously and in competition at the same active site. This is Ribulose bisphosphate carboxylase large chain from Acer saccharum (Sugar maple).